Consider the following 456-residue polypeptide: Trigger factor (456 aa).

A PPIase FKBP-type domain is found at 192 to 277; sequence GDTVVIDFVG…IHEVKTKEVP (86 aa).

Belongs to the FKBP-type PPIase family. Tig subfamily.

The protein localises to the cytoplasm. It catalyses the reaction [protein]-peptidylproline (omega=180) = [protein]-peptidylproline (omega=0). Functionally, involved in protein export. Acts as a chaperone by maintaining the newly synthesized protein in an open conformation. Functions as a peptidyl-prolyl cis-trans isomerase. The chain is Trigger factor from Streptococcus pyogenes serotype M4 (strain MGAS10750).